The following is a 397-amino-acid chain: Lysophospholipid transporter LplT (397 aa).

Residues 1-17 (MSESVHTNTSLWSKGMK) lie on the Periplasmic side of the membrane. A helical membrane pass occupies residues 18-38 (AVIVAQFLSAFGDNALLFATL). Residues 39–52 (ALLKAQFYPEWSQP) lie on the Cytoplasmic side of the membrane. The chain crosses the membrane as a helical span at residues 53–73 (ILQMVFVGAYILFAPFVGQVA). The Periplasmic portion of the chain corresponds to 74–90 (DSFAKGRVMMFANGLKL). Residues 91–111 (LGAASICFGINPFLGYTLVGV) traverse the membrane as a helical segment. At 112–144 (GAAAYSPAKYGILGELTTGSKLVKANGLMEAST) the chain is on the cytoplasmic side. The helical transmembrane segment at 145 to 165 (IAAILLGSVAGGVLADWHILV) threads the bilayer. A topological domain (periplasmic) is located at residue Ala-166. A helical membrane pass occupies residues 167-187 (LVACALAYGGAVVANIYIPKL). Residues 188–226 (AAARPGQSWNLISMTRSFLNACTSLWRNGETRFSLVGTS) lie on the Cytoplasmic side of the membrane. A helical transmembrane segment spans residues 227-247 (LFWGAGVTLRFLLVLWVPVAL). Topologically, residues 248-256 (GITDNATPT) are periplasmic. The helical transmembrane segment at 257 to 277 (YLNAMVAIGIVVGAGAAAKLV) threads the bilayer. Residues 278–280 (TLE) are Cytoplasmic-facing. Residues 281-301 (TVSRCMPAGILIGVVVLIFSL) traverse the membrane as a helical segment. At 302–304 (QHE) the chain is on the periplasmic side. A helical membrane pass occupies residues 305–325 (LLPAYALLMLIGVLGGFFVVP). The Cytoplasmic portion of the chain corresponds to 326 to 343 (LNALLQERGKKSVGAGNA). A helical membrane pass occupies residues 344–364 (IAVQNLGENSAMLLMLGIYSL). The Periplasmic portion of the chain corresponds to 365-366 (AV). The helical transmembrane segment at 367–387 (MVGIPVVPIGIGFGALFALAI) threads the bilayer. Residues 388–397 (TALWIWQRRH) are Cytoplasmic-facing.

This sequence belongs to the major facilitator superfamily. LplT (TC 2.A.1.42) family.

The protein resides in the cell inner membrane. Its function is as follows. Catalyzes the facilitated diffusion of 2-acyl-glycero-3-phosphoethanolamine (2-acyl-GPE) into the cell. This Escherichia coli O81 (strain ED1a) protein is Lysophospholipid transporter LplT.